A 91-amino-acid chain; its full sequence is Small ribosomal subunit protein uS19m (91 aa).

This sequence belongs to the universal ribosomal protein uS19 family. In terms of assembly, component of the mitochondrial small ribosomal subunit (mt-SSU). Mature yeast 74S mitochondrial ribosomes consist of a small (37S) and a large (54S) subunit. The 37S small subunit contains a 15S ribosomal RNA (15S mt-rRNA) and 34 different proteins. The 54S large subunit contains a 21S rRNA (21S mt-rRNA) and 46 different proteins.

Its subcellular location is the mitochondrion. Component of the mitochondrial ribosome (mitoribosome), a dedicated translation machinery responsible for the synthesis of mitochondrial genome-encoded proteins, including at least some of the essential transmembrane subunits of the mitochondrial respiratory chain. The mitoribosomes are attached to the mitochondrial inner membrane and translation products are cotranslationally integrated into the membrane. The sequence is that of Small ribosomal subunit protein uS19m (RSM19) from Saccharomyces cerevisiae (strain ATCC 204508 / S288c) (Baker's yeast).